Reading from the N-terminus, the 372-residue chain is Carbamoyl phosphate synthase small chain (372 aa).

Residues 1–179 (MRAILALEDG…ALVTGKTLPP (179 aa)) are CPSase. Positions 45, 231, and 233 each coordinate L-glutamine. The region spanning 183–369 (DIVAFDFGIK…RKMIAASKRQ (187 aa)) is the Glutamine amidotransferase type-1 domain. The active-site Nucleophile is the Cys258. Residues Leu259, Gln262, Asn300, Gly302, and Phe303 each contribute to the L-glutamine site. Active-site residues include His342 and Glu344.

It belongs to the CarA family. Composed of two chains; the small (or glutamine) chain promotes the hydrolysis of glutamine to ammonia, which is used by the large (or ammonia) chain to synthesize carbamoyl phosphate. Tetramer of heterodimers (alpha,beta)4.

It catalyses the reaction hydrogencarbonate + L-glutamine + 2 ATP + H2O = carbamoyl phosphate + L-glutamate + 2 ADP + phosphate + 2 H(+). The enzyme catalyses L-glutamine + H2O = L-glutamate + NH4(+). It participates in amino-acid biosynthesis; L-arginine biosynthesis; carbamoyl phosphate from bicarbonate: step 1/1. Its pathway is pyrimidine metabolism; UMP biosynthesis via de novo pathway; (S)-dihydroorotate from bicarbonate: step 1/3. In terms of biological role, small subunit of the glutamine-dependent carbamoyl phosphate synthetase (CPSase). CPSase catalyzes the formation of carbamoyl phosphate from the ammonia moiety of glutamine, carbonate, and phosphate donated by ATP, constituting the first step of 2 biosynthetic pathways, one leading to arginine and/or urea and the other to pyrimidine nucleotides. The small subunit (glutamine amidotransferase) binds and cleaves glutamine to supply the large subunit with the substrate ammonia. In Akkermansia muciniphila (strain ATCC BAA-835 / DSM 22959 / JCM 33894 / BCRC 81048 / CCUG 64013 / CIP 107961 / Muc), this protein is Carbamoyl phosphate synthase small chain.